The following is an 810-amino-acid chain: Phenylalanine--tRNA ligase beta subunit (810 aa).

Residues 39 to 151 form the tRNA-binding domain; that stretch reads RTWAAGVVVG…AGLQAGQPVG (113 aa). One can recognise a B5 domain in the interval 408 to 494; that stretch reads EPEHSITLRL…RLYGYDNFGE (87 aa). Positions 472, 478, 481, and 482 each coordinate Mg(2+). One can recognise an FDX-ACB domain in the interval 716 to 809; that stretch reads SSFPASDRDL…LVERFRVTLR (94 aa).

The protein belongs to the phenylalanyl-tRNA synthetase beta subunit family. Type 1 subfamily. Tetramer of two alpha and two beta subunits. Mg(2+) serves as cofactor.

Its subcellular location is the cytoplasm. The catalysed reaction is tRNA(Phe) + L-phenylalanine + ATP = L-phenylalanyl-tRNA(Phe) + AMP + diphosphate + H(+). The sequence is that of Phenylalanine--tRNA ligase beta subunit (pheT) from Synechococcus elongatus (strain ATCC 33912 / PCC 7942 / FACHB-805) (Anacystis nidulans R2).